The following is a 108-amino-acid chain: Anthranilate 1,2-dioxygenase ferredoxin subunit (108 aa).

A Rieske domain is found at 9-105 (WHPLGAIDEF…IRIVDGQVEV (97 aa)). 4 residues coordinate [2Fe-2S] cluster: Cys49, His51, Cys68, and His71.

Belongs to the bacterial ring-hydroxylating dioxygenase ferredoxin component family. As to quaternary structure, part of a multicomponent enzyme system composed of a reductase (AndAa), a ferredoxin (AndAb) and a two-subunit oxygenase component (AndAc and AndAd). Requires [2Fe-2S] cluster as cofactor.

It functions in the pathway aromatic compound metabolism; anthranilate degradation via hydroxylation; catechol from anthranilate: step 1/1. Part of the multicomponent anthranilate dioxygenase, that converts anthranilate to catechol. This protein seems to be a 2Fe-2S ferredoxin. The chain is Anthranilate 1,2-dioxygenase ferredoxin subunit from Burkholderia cepacia (Pseudomonas cepacia).